The primary structure comprises 76 residues: uncharacterized protein (76 aa).

This is an uncharacterized protein from Methanocaldococcus jannaschii (strain ATCC 43067 / DSM 2661 / JAL-1 / JCM 10045 / NBRC 100440) (Methanococcus jannaschii).